Consider the following 311-residue polypeptide: Methionyl-tRNA formyltransferase (311 aa).

112–115 (SLLP) contributes to the (6S)-5,6,7,8-tetrahydrofolate binding site.

It belongs to the Fmt family.

The enzyme catalyses L-methionyl-tRNA(fMet) + (6R)-10-formyltetrahydrofolate = N-formyl-L-methionyl-tRNA(fMet) + (6S)-5,6,7,8-tetrahydrofolate + H(+). Functionally, attaches a formyl group to the free amino group of methionyl-tRNA(fMet). The formyl group appears to play a dual role in the initiator identity of N-formylmethionyl-tRNA by promoting its recognition by IF2 and preventing the misappropriation of this tRNA by the elongation apparatus. This is Methionyl-tRNA formyltransferase from Chelativorans sp. (strain BNC1).